The sequence spans 583 residues: Phosphoglucomutase, cytoplasmic (583 aa).

The tract at residues 1-20 (MANFKVSRVETTPFEGQKPG) is disordered. Alpha-D-glucose 1,6-bisphosphate contacts are provided by R25 and S124. The active-site Phosphoserine intermediate is S124. Residues S124, D300, D302, and D304 each coordinate Mg(2+). Residue S124 is modified to Phosphoserine. 6 residues coordinate alpha-D-glucose 1,6-bisphosphate: D304, R305, T368, E387, S389, and K400.

It belongs to the phosphohexose mutase family. In terms of assembly, monomer. Requires Mg(2+) as cofactor.

It localises to the cytoplasm. It catalyses the reaction alpha-D-glucose 1-phosphate = alpha-D-glucose 6-phosphate. The catalysed reaction is O-phospho-L-seryl-[protein] + alpha-D-glucose 1-phosphate = alpha-D-glucose 1,6-bisphosphate + L-seryl-[protein]. The enzyme catalyses alpha-D-glucose 1,6-bisphosphate + L-seryl-[protein] = O-phospho-L-seryl-[protein] + alpha-D-glucose 6-phosphate. Functionally, catalyzes the reversible isomerization of alpha-D-glucose 1-phosphate to alpha-D-glucose 6-phosphate. The mechanism proceeds via the intermediate compound alpha-D-glucose 1,6-bisphosphate. This enzyme participates in both the breakdown and synthesis of glucose. The sequence is that of Phosphoglucomutase, cytoplasmic (PGM1) from Solanum tuberosum (Potato).